The chain runs to 1114 residues: Mediator of RNA polymerase II transcription subunit 14 (1114 aa).

3 disordered regions span residues 1–27, 40–79, and 120–141; these read MPGVVMDNANIGGLRHGPGNTYPQDGL, ANAQDGPVHVNGVEKNASQSRSVEAIPSNHASRVTKGPPE, and HGIHPSTAPTTGKSPGNQSPGN. The span at 126–140 shows a compositional bias: polar residues; it reads TAPTTGKSPGNQSPG.

It belongs to the Mediator complex subunit 14 family. As to quaternary structure, component of the Mediator complex.

The protein resides in the nucleus. Component of the Mediator complex, a coactivator involved in the regulated transcription of nearly all RNA polymerase II-dependent genes. Mediator functions as a bridge to convey information from gene-specific regulatory proteins to the basal RNA polymerase II transcription machinery. Mediator is recruited to promoters by direct interactions with regulatory proteins and serves as a scaffold for the assembly of a functional preinitiation complex with RNA polymerase II and the general transcription factors. The chain is Mediator of RNA polymerase II transcription subunit 14 (rgr1) from Aspergillus niger (strain ATCC MYA-4892 / CBS 513.88 / FGSC A1513).